Reading from the N-terminus, the 340-residue chain is tRNA N6-adenosine threonylcarbamoyltransferase (340 aa).

Fe cation-binding residues include histidine 111 and histidine 115. Residues isoleucine 134–alanine 138, aspartate 167, glycine 180, and asparagine 273 each bind substrate. Aspartate 301 contacts Fe cation.

It belongs to the KAE1 / TsaD family. Fe(2+) is required as a cofactor.

It localises to the cytoplasm. The enzyme catalyses L-threonylcarbamoyladenylate + adenosine(37) in tRNA = N(6)-L-threonylcarbamoyladenosine(37) in tRNA + AMP + H(+). Required for the formation of a threonylcarbamoyl group on adenosine at position 37 (t(6)A37) in tRNAs that read codons beginning with adenine. Is involved in the transfer of the threonylcarbamoyl moiety of threonylcarbamoyl-AMP (TC-AMP) to the N6 group of A37, together with TsaE and TsaB. TsaD likely plays a direct catalytic role in this reaction. The chain is tRNA N6-adenosine threonylcarbamoyltransferase from Wigglesworthia glossinidia brevipalpis.